Here is a 194-residue protein sequence, read N- to C-terminus: Large ribosomal subunit protein eL15 (194 aa).

A disordered region spans residues 164-194; it reads AGRKARGLRRKGRGAEKVRPSLRANFRKKRR. Positions 166–175 are enriched in basic residues; the sequence is RKARGLRRKG.

Belongs to the eukaryotic ribosomal protein eL15 family.

This is Large ribosomal subunit protein eL15 (rpl15e) from Archaeoglobus fulgidus (strain ATCC 49558 / DSM 4304 / JCM 9628 / NBRC 100126 / VC-16).